We begin with the raw amino-acid sequence, 336 residues long: N-acetyl-gamma-glutamyl-phosphate reductase (336 aa).

Cysteine 144 is a catalytic residue.

This sequence belongs to the NAGSA dehydrogenase family. Type 1 subfamily.

The protein resides in the cytoplasm. It carries out the reaction N-acetyl-L-glutamate 5-semialdehyde + phosphate + NADP(+) = N-acetyl-L-glutamyl 5-phosphate + NADPH + H(+). The protein operates within amino-acid biosynthesis; L-arginine biosynthesis; N(2)-acetyl-L-ornithine from L-glutamate: step 3/4. In terms of biological role, catalyzes the NADPH-dependent reduction of N-acetyl-5-glutamyl phosphate to yield N-acetyl-L-glutamate 5-semialdehyde. The protein is N-acetyl-gamma-glutamyl-phosphate reductase of Methanosarcina acetivorans (strain ATCC 35395 / DSM 2834 / JCM 12185 / C2A).